We begin with the raw amino-acid sequence, 301 residues long: Probable aspartoacylase (301 aa).

Zn(2+) contacts are provided by His-13 and Glu-16. Substrate-binding positions include Arg-54 and 61–62 (NR). A Zn(2+)-binding site is contributed by His-105. Residues Glu-163 and Tyr-273 each contribute to the substrate site.

This sequence belongs to the AspA/AstE family. Aspartoacylase subfamily. The cofactor is Zn(2+).

The enzyme catalyses an N-acyl-L-aspartate + H2O = a carboxylate + L-aspartate. This chain is Probable aspartoacylase, found in Prochlorococcus marinus (strain MIT 9215).